We begin with the raw amino-acid sequence, 629 residues long: Long-chain-fatty-acid--AMP ligase FadD32 (629 aa).

ATP-binding positions include 186 to 191, Ser-341, Ala-345, Asp-468, and Arg-482; that span reads TSGSTR.

Belongs to the ATP-dependent AMP-binding enzyme family. As to quaternary structure, monomer.

The catalysed reaction is a long-chain fatty acid + holo-[ACP] + ATP = a long-chain fatty acyl-[ACP] + AMP + diphosphate. The enzyme catalyses dodecanoate + ATP + H(+) = dodecanoyl-AMP + diphosphate. It carries out the reaction tetradecanoate + ATP + H(+) = tetradecanoyl-AMP + diphosphate. It participates in lipid metabolism; mycolic acid biosynthesis. Its activity is regulated as follows. The acyl-AMP ligase activity is inhibited by the alkylphosphate esters of AMP, adenosine 50-dodecylphosphate (AMPC12) and eicosyl-AMP (AMPC20). Involved in the biosynthesis of mycolic acids. Catalyzes the activation of long-chain fatty acids as acyl-adenylates (acyl-AMP), which are then transferred to the phosphopantetheine arm of the polyketide synthase Pks13 for further chain extension. Can use dodecanoate (C12) and tetradecanoate (C14). The chain is Long-chain-fatty-acid--AMP ligase FadD32 (fadD32) from Mycobacterium marinum (strain ATCC BAA-535 / M).